The chain runs to 457 residues: Argininosuccinate lyase (457 aa).

This sequence belongs to the lyase 1 family. Argininosuccinate lyase subfamily.

Its subcellular location is the cytoplasm. It carries out the reaction 2-(N(omega)-L-arginino)succinate = fumarate + L-arginine. Its pathway is amino-acid biosynthesis; L-arginine biosynthesis; L-arginine from L-ornithine and carbamoyl phosphate: step 3/3. This chain is Argininosuccinate lyase, found in Exiguobacterium sibiricum (strain DSM 17290 / CCUG 55495 / CIP 109462 / JCM 13490 / 255-15).